Reading from the N-terminus, the 118-residue chain is MLVTLMKAKLHRATVTQADLDYEGSIAIDRDLLDASGILPHEQVDVLNITTGARFTTYAIEAPRGSKVIGVNGAAARLVQKGDKVIVVTYGMLPAEEARNYAPTVVLLDDGNEIKKAA.

Residue serine 25 is the Schiff-base intermediate with substrate; via pyruvic acid of the active site. Pyruvic acid (Ser) is present on serine 25. Threonine 57 contacts substrate. The active-site Proton donor is the tyrosine 58. 73 to 75 (GAA) contacts substrate.

Belongs to the PanD family. Heterooctamer of four alpha and four beta subunits. Pyruvate serves as cofactor. Is synthesized initially as an inactive proenzyme, which is activated by self-cleavage at a specific serine bond to produce a beta-subunit with a hydroxyl group at its C-terminus and an alpha-subunit with a pyruvoyl group at its N-terminus.

The protein resides in the cytoplasm. The catalysed reaction is L-aspartate + H(+) = beta-alanine + CO2. Its pathway is cofactor biosynthesis; (R)-pantothenate biosynthesis; beta-alanine from L-aspartate: step 1/1. Its function is as follows. Catalyzes the pyruvoyl-dependent decarboxylation of aspartate to produce beta-alanine. This is Aspartate 1-decarboxylase from Phenylobacterium zucineum (strain HLK1).